The sequence spans 337 residues: Large ribosomal subunit protein uL3 (337 aa).

This sequence belongs to the universal ribosomal protein uL3 family. In terms of assembly, part of the 50S ribosomal subunit. Forms a cluster with proteins L14 and L24e.

One of the primary rRNA binding proteins, it binds directly near the 3'-end of the 23S rRNA, where it nucleates assembly of the 50S subunit. The protein is Large ribosomal subunit protein uL3 of Methanosphaerula palustris (strain ATCC BAA-1556 / DSM 19958 / E1-9c).